The sequence spans 95 residues: Small ribosomal subunit protein bS18 (95 aa).

The protein belongs to the bacterial ribosomal protein bS18 family. Part of the 30S ribosomal subunit. Forms a tight heterodimer with protein bS6.

Functionally, binds as a heterodimer with protein bS6 to the central domain of the 16S rRNA, where it helps stabilize the platform of the 30S subunit. In Rickettsia akari (strain Hartford), this protein is Small ribosomal subunit protein bS18.